Consider the following 48-residue polypeptide: Piguamerin (48 aa).

5 disulfides stabilise this stretch: Cys-3-Cys-14, Cys-8-Cys-19, Cys-21-Cys-41, Cys-26-Cys-45, and Cys-30-Cys-47. Residues 19–47 (CVCVIGQCRKYCPNGFKKDENGCTFPCTC) form the Antistasin-like domain.

It belongs to the protease inhibitor I15 (antistasin) family.

The protein resides in the secreted. Its function is as follows. Inhibits plasma and tissue kallikrein, and trypsin. May be involved in leech hematophagia. This chain is Piguamerin, found in Hirudo nipponia (Korean blood-sucking leech).